Consider the following 161-residue polypeptide: Small ribosomal subunit protein uS9 (161 aa).

This sequence belongs to the universal ribosomal protein uS9 family.

This is Small ribosomal subunit protein uS9 (rpsI) from Rickettsia prowazekii (strain Madrid E).